The chain runs to 85 residues: Small ribosomal subunit protein bS18 (85 aa).

Residues M1–Q12 are compositionally biased toward gly residues. Residues M1 to T22 form a disordered region.

It belongs to the bacterial ribosomal protein bS18 family. As to quaternary structure, part of the 30S ribosomal subunit. Forms a tight heterodimer with protein bS6.

In terms of biological role, binds as a heterodimer with protein bS6 to the central domain of the 16S rRNA, where it helps stabilize the platform of the 30S subunit. In Azorhizobium caulinodans (strain ATCC 43989 / DSM 5975 / JCM 20966 / LMG 6465 / NBRC 14845 / NCIMB 13405 / ORS 571), this protein is Small ribosomal subunit protein bS18.